Consider the following 723-residue polypeptide: Polyribonucleotide nucleotidyltransferase (723 aa).

Residues Asp-497 and Asp-503 each contribute to the Mg(2+) site. The 60-residue stretch at 564–623 folds into the KH domain; that stretch reads PRLLSFRIDPELIGTVIGPGGRTIKGITERTNTKIDIEDGGIVTIASHDGAAAEAAQRII. Residues 633 to 701 form the S1 motif domain; the sequence is GEVFTGTITR…NRGRINLTLR (69 aa). The interval 701-723 is disordered; that stretch reads RGVPQNGEETQSEPAPTPVAPLN.

Belongs to the polyribonucleotide nucleotidyltransferase family. It depends on Mg(2+) as a cofactor.

It is found in the cytoplasm. The catalysed reaction is RNA(n+1) + phosphate = RNA(n) + a ribonucleoside 5'-diphosphate. Its function is as follows. Involved in mRNA degradation. Catalyzes the phosphorolysis of single-stranded polyribonucleotides processively in the 3'- to 5'-direction. This is Polyribonucleotide nucleotidyltransferase from Prochlorococcus marinus (strain MIT 9313).